The primary structure comprises 513 residues: ATP synthase subunit alpha (513 aa).

Glycine 169–serine 176 provides a ligand contact to ATP.

This sequence belongs to the ATPase alpha/beta chains family. In terms of assembly, F-type ATPases have 2 components, CF(1) - the catalytic core - and CF(0) - the membrane proton channel. CF(1) has five subunits: alpha(3), beta(3), gamma(1), delta(1), epsilon(1). CF(0) has three main subunits: a(1), b(2) and c(9-12). The alpha and beta chains form an alternating ring which encloses part of the gamma chain. CF(1) is attached to CF(0) by a central stalk formed by the gamma and epsilon chains, while a peripheral stalk is formed by the delta and b chains.

It localises to the cell inner membrane. It carries out the reaction ATP + H2O + 4 H(+)(in) = ADP + phosphate + 5 H(+)(out). Produces ATP from ADP in the presence of a proton gradient across the membrane. The alpha chain is a regulatory subunit. The sequence is that of ATP synthase subunit alpha from Sodalis glossinidius (strain morsitans).